A 363-amino-acid chain; its full sequence is Pyrimidine monooxygenase RutA (363 aa).

Residues 49 to 50, asparagine 115, glutamate 124, 140 to 141, and serine 190 each bind FMN; these read IK and RY.

It belongs to the NtaA/SnaA/DszA monooxygenase family. RutA subfamily.

The enzyme catalyses uracil + FMNH2 + NADH + O2 = (Z)-3-ureidoacrylate + FMN + NAD(+) + H2O + H(+). The catalysed reaction is thymine + FMNH2 + NADH + O2 = (Z)-2-methylureidoacrylate + FMN + NAD(+) + H2O + H(+). In terms of biological role, catalyzes the pyrimidine ring opening between N-3 and C-4 by an unusual flavin hydroperoxide-catalyzed mechanism, adding oxygen atoms in the process to yield ureidoacrylate peracid, that immediately reacts with FMN forming ureidoacrylate and FMN-N(5)-oxide. The FMN-N(5)-oxide reacts spontaneously with NADH to produce FMN. Requires the flavin reductase RutF to regenerate FMN in vivo. The sequence is that of Pyrimidine monooxygenase RutA from Escherichia coli O157:H7 (strain EC4115 / EHEC).